A 273-amino-acid chain; its full sequence is F-actin-capping protein subunit alpha (273 aa).

The protein belongs to the F-actin-capping protein alpha subunit family. In terms of assembly, component of the F-actin capping complex, composed of a heterodimer of an alpha and a beta subunit.

The protein resides in the cytoplasm. Its subcellular location is the cytoskeleton. It is found in the actin patch. In terms of biological role, F-actin-capping proteins bind in a Ca(2+)-independent manner to the fast growing ends of actin filaments (barbed end) thereby blocking the exchange of subunits at these ends. Unlike other capping proteins (such as gelsolin and severin), these proteins do not sever actin filaments. This chain is F-actin-capping protein subunit alpha (cap1), found in Aspergillus oryzae (strain ATCC 42149 / RIB 40) (Yellow koji mold).